Consider the following 270-residue polypeptide: NAD kinase (270 aa).

D57 serves as the catalytic Proton acceptor. NAD(+)-binding positions include 57 to 58 (DG), 125 to 126 (NE), R150, and N227.

The protein belongs to the NAD kinase family. Requires a divalent metal cation as cofactor.

The protein localises to the cytoplasm. The enzyme catalyses NAD(+) + ATP = ADP + NADP(+) + H(+). In terms of biological role, involved in the regulation of the intracellular balance of NAD and NADP, and is a key enzyme in the biosynthesis of NADP. Catalyzes specifically the phosphorylation on 2'-hydroxyl of the adenosine moiety of NAD to yield NADP. This chain is NAD kinase, found in Ureaplasma parvum serovar 3 (strain ATCC 700970).